The chain runs to 689 residues: Protein asunder (689 aa).

Residues 521 to 550 adopt a coiled-coil conformation; that stretch reads NGARLKLSKAKDQYRLLYRELEQLIQLNAT. 2 disordered regions span residues 591–619 and 665–689; these read SPER…SKRR and GTKD…SVRS. The span at 599–614 shows a compositional bias: low complexity; that stretch reads SSVGASGSSNSNSLLK. The Nuclear localization signal (NLS) motif lies at 613–619; the sequence is LKASKRR.

It belongs to the Integrator subunit 13 family. As to quaternary structure, belongs to the multiprotein complex Integrator, at least composed of IntS1, IntS2, IntS3, IntS4, omd/IntS5, IntS6, defl/IntS7, IntS8, IntS9, IntS10, IntS11, IntS12, asun/IntS13, IntS14 and IntS15. The core complex associates with protein phosphatase 2A subunits mts/PP2A and Pp2A-29B, to form the Integrator-PP2A (INTAC) complex. Post-translationally, phosphorylated.

The protein localises to the nucleus. Its subcellular location is the cytoplasm. It localises to the perinuclear region. Functionally, component of the integrator complex, a multiprotein complex that terminates RNA polymerase II (Pol II) transcription in the promoter-proximal region of genes. The integrator complex provides a quality checkpoint during transcription elongation by driving premature transcription termination of transcripts that are unfavorably configured for transcriptional elongation: the complex terminates transcription by (1) catalyzing dephosphorylation of the C-terminal domain (CTD) of Pol II subunit Polr2A/Rbp1 and Spt5, and (2) degrading the exiting nascent RNA transcript via endonuclease activity. The integrator complex is also involved in the 3'-end processing of the U7 snRNA, and also the spliceosomal snRNAs U1, U2, U4 and U5. The sequence is that of Protein asunder (asun) from Drosophila sechellia (Fruit fly).